The primary structure comprises 330 residues: ADP-L-glycero-D-manno-heptose-6-epimerase (330 aa).

NADP(+) is bound by residues 11–12 (FI), 32–33 (DN), K39, K54, 75–79 (EGACS), and N92. The Proton acceptor role is filled by Y139. K143 is an NADP(+) binding site. N168 contacts substrate. NADP(+) is bound by residues V169 and K177. The Proton acceptor role is filled by K177. Substrate contacts are provided by residues R179, H186, 200–203 (FGEY), R213, and Y292.

This sequence belongs to the NAD(P)-dependent epimerase/dehydratase family. HldD subfamily. As to quaternary structure, homopentamer. NADP(+) serves as cofactor.

It catalyses the reaction ADP-D-glycero-beta-D-manno-heptose = ADP-L-glycero-beta-D-manno-heptose. Its pathway is nucleotide-sugar biosynthesis; ADP-L-glycero-beta-D-manno-heptose biosynthesis; ADP-L-glycero-beta-D-manno-heptose from D-glycero-beta-D-manno-heptose 7-phosphate: step 4/4. In terms of biological role, catalyzes the interconversion between ADP-D-glycero-beta-D-manno-heptose and ADP-L-glycero-beta-D-manno-heptose via an epimerization at carbon 6 of the heptose. The protein is ADP-L-glycero-D-manno-heptose-6-epimerase of Paraburkholderia phymatum (strain DSM 17167 / CIP 108236 / LMG 21445 / STM815) (Burkholderia phymatum).